A 202-amino-acid polypeptide reads, in one-letter code: Putative transmembrane protein ORF202 (202 aa).

The next 5 membrane-spanning stretches (helical) occupy residues 13 to 33 (AIAF…FHYI), 40 to 60 (VFYL…LFLG), 87 to 107 (YYPV…ISVF), 156 to 176 (YGAL…HSLS), and 177 to 197 (LTAF…DLWA).

The protein localises to the host membrane. This chain is Putative transmembrane protein ORF202, found in Acidianus filamentous virus 2 (isolate Italy/Pozzuoli) (AFV-2).